Consider the following 207-residue polypeptide: ATP-dependent Clp protease proteolytic subunit (207 aa).

Catalysis depends on S111, which acts as the Nucleophile. The active site involves H136.

Belongs to the peptidase S14 family. As to quaternary structure, fourteen ClpP subunits assemble into 2 heptameric rings which stack back to back to give a disk-like structure with a central cavity, resembling the structure of eukaryotic proteasomes.

Its subcellular location is the cytoplasm. The enzyme catalyses Hydrolysis of proteins to small peptides in the presence of ATP and magnesium. alpha-casein is the usual test substrate. In the absence of ATP, only oligopeptides shorter than five residues are hydrolyzed (such as succinyl-Leu-Tyr-|-NHMec, and Leu-Tyr-Leu-|-Tyr-Trp, in which cleavage of the -Tyr-|-Leu- and -Tyr-|-Trp bonds also occurs).. In terms of biological role, cleaves peptides in various proteins in a process that requires ATP hydrolysis. Has a chymotrypsin-like activity. Plays a major role in the degradation of misfolded proteins. The polypeptide is ATP-dependent Clp protease proteolytic subunit (Pectobacterium atrosepticum (strain SCRI 1043 / ATCC BAA-672) (Erwinia carotovora subsp. atroseptica)).